Here is a 71-residue protein sequence, read N- to C-terminus: MENKFDMEKFKKLAAVVSEDELDTLLDETTVGAGSSNDCADLILKITGVVVSATSKFDWCPTGACTTSCRF.

Positions 1 to 33 (MENKFDMEKFKKLAAVVSEDELDTLLDETTVGA) are cleaved as a propeptide — cleaved by FlvT. The lanthionine (Ser-Cys); by FlvM2 cross-link spans 35-39 (SSNDC). Serine 36 carries the post-translational modification 2,3-didehydroalanine (Ser); by FlvM2. Cross-links (beta-methyllanthionine (Thr-Cys); by FlvM2) lie at residues 54–60 (TSKFDWC), 62–65 (TGAC), and 66–69 (TTSC).

Contains LL-lanthionine and DL-beta-methyllanthionine, when coepressed in E.coli with the flavecin synthetase FlvM2.

It localises to the secreted. Functionally, lanthionine-containing peptide antibiotic (lantibiotic) that is probably active on Gram-positive bacteria, since its analog [Del1]Flvbeta.c shows antibacterial activity against M.luteus. This activity is not synergistically enhanced by [Del2]Flvalpha.a, an analog of Flvalpha.a, which is encoded by the same operon than Flvbeta.c. The bactericidal activity of lantibiotics is based on depolarization of energized bacterial cytoplasmic membranes, initiated by the formation of aqueous transmembrane pores. The polypeptide is Lantibiotic Flvbeta.c (Ruminococcus flavefaciens).